Here is a 441-residue protein sequence, read N- to C-terminus: FAM10 family protein At4g22670 (441 aa).

The segment at lysine 41–glutamate 114 is disordered. Residues valine 46–proline 55 are compositionally biased toward basic and acidic residues. Acidic residues-rich tracts occupy residues glutamate 61–glutamate 71 and glutamate 78–asparagine 102. Serine 63 and serine 89 each carry phosphoserine. TPR repeat units follow at residues glutamate 121–serine 156, isoleucine 158–serine 190, and alanine 191–glutamate 224. Residues asparagine 236–serine 285 adopt a coiled-coil conformation. Over residues arginine 244 to glutamine 282 the composition is skewed to basic and acidic residues. The segment at arginine 244–glycine 314 is disordered. The span at serine 289–glycine 314 shows a compositional bias: gly residues. The STI1 domain maps to aspartate 391 to isoleucine 430.

This sequence belongs to the FAM10 family.

This Arabidopsis thaliana (Mouse-ear cress) protein is FAM10 family protein At4g22670.